Consider the following 396-residue polypeptide: Acetate kinase (396 aa).

Asn-8 lines the Mg(2+) pocket. Lys-15 provides a ligand contact to ATP. A substrate-binding site is contributed by Arg-89. The active-site Proton donor/acceptor is Asp-146. ATP is bound by residues 206–210 (HIGNG), 283–285 (DMR), and 331–335 (GMGEN). Position 383 (Glu-383) interacts with Mg(2+).

This sequence belongs to the acetokinase family. Homodimer. Mg(2+) serves as cofactor. It depends on Mn(2+) as a cofactor.

Its subcellular location is the cytoplasm. The catalysed reaction is acetate + ATP = acetyl phosphate + ADP. The protein operates within metabolic intermediate biosynthesis; acetyl-CoA biosynthesis; acetyl-CoA from acetate: step 1/2. Its function is as follows. Catalyzes the formation of acetyl phosphate from acetate and ATP. Can also catalyze the reverse reaction. The polypeptide is Acetate kinase (Streptococcus uberis (strain ATCC BAA-854 / 0140J)).